The chain runs to 363 residues: NAD(P)H-quinone oxidoreductase subunit 1, chloroplastic (363 aa).

Transmembrane regions (helical) follow at residues 30-50 (FLPI…IVWL), 104-124 (IAVI…HLVL), 129-149 (IGVF…LMSG), 248-268 (YSGI…LVSS), 300-320 (VFGT…FLFI), and 343-363 (FLLP…LLSL).

This sequence belongs to the complex I subunit 1 family. As to quaternary structure, NDH is composed of at least 16 different subunits, 5 of which are encoded in the nucleus.

It is found in the plastid. The protein resides in the chloroplast thylakoid membrane. The enzyme catalyses a plastoquinone + NADH + (n+1) H(+)(in) = a plastoquinol + NAD(+) + n H(+)(out). The catalysed reaction is a plastoquinone + NADPH + (n+1) H(+)(in) = a plastoquinol + NADP(+) + n H(+)(out). NDH shuttles electrons from NAD(P)H:plastoquinone, via FMN and iron-sulfur (Fe-S) centers, to quinones in the photosynthetic chain and possibly in a chloroplast respiratory chain. The immediate electron acceptor for the enzyme in this species is believed to be plastoquinone. Couples the redox reaction to proton translocation, and thus conserves the redox energy in a proton gradient. The sequence is that of NAD(P)H-quinone oxidoreductase subunit 1, chloroplastic from Eucalyptus globulus subsp. globulus (Tasmanian blue gum).